The sequence spans 333 residues: Holliday junction branch migration complex subunit RuvB (333 aa).

The large ATPase domain (RuvB-L) stretch occupies residues 1 to 181 (MARILDNDLL…FGINGHMEYY (181 aa)). ATP is bound by residues Leu-20, Arg-21, Gly-62, Lys-65, Thr-66, Thr-67, 128 to 130 (EDY), Arg-171, Tyr-181, and Arg-218. Residue Thr-66 participates in Mg(2+) binding. Residues 130-148 (YYIDIMIGAGETSRSVHLD) are presensor-1 beta-hairpin. A small ATPAse domain (RuvB-S) region spans residues 182 to 252 (ELPDLTEIVE…IADQALTMLD (71 aa)). The interval 255–333 (HEGLDYVDQK…HMGYDYTRDN (79 aa)) is head domain (RuvB-H). Residues Arg-291, Arg-310, Arg-312, and Arg-315 each coordinate DNA.

It belongs to the RuvB family. In terms of assembly, homohexamer. Forms an RuvA(8)-RuvB(12)-Holliday junction (HJ) complex. HJ DNA is sandwiched between 2 RuvA tetramers; dsDNA enters through RuvA and exits via RuvB. Only 4 subunits contact one DNA strand at any time. Two adjacent subunits are contacted by domain III of RuvA. An RuvB hexamer assembles on each DNA strand where it exits the tetramer. Each RuvB hexamer is contacted by two RuvA subunits (via domain III) on 2 adjacent RuvB subunits; this complex drives branch migration. In the full resolvosome a probable DNA-RuvA(4)-RuvB(12)-RuvC(2) complex forms which resolves the HJ.

The protein localises to the cytoplasm. The enzyme catalyses ATP + H2O = ADP + phosphate + H(+). Its activity is regulated as follows. Binding of domain III of RuvA to a single subunit of the RuvB hexamer activates the ATPase 2 subunits away and nucleotide exchange in the adjacent subunit. Its function is as follows. The RuvA-RuvB-RuvC complex processes Holliday junction (HJ) DNA during genetic recombination and DNA repair, while the RuvA-RuvB complex plays an important role in the rescue of blocked DNA replication forks via replication fork reversal (RFR). Catalyzes branch migration on Holliday junction (HJ) DNA in complex with RuvA from S.typhimurim and ATP. RuvA specifically binds to HJ cruciform DNA, conferring on it an open structure. The RuvB hexamer acts as an ATP-dependent pump, pulling dsDNA into and through the RuvAB complex. Forms 2 homohexamers on either side of HJ DNA bound by 1 or 2 RuvA tetramers; 4 subunits per hexamer contact DNA at a time. Coordinated motions by a converter formed by DNA-disengaged RuvB subunits stimulates ATP hydrolysis and nucleotide exchange. Immobilization of the converter enables RuvB to convert the ATP-contained energy into a lever motion, pulling 2 nucleotides of DNA out of the RuvA tetramer per ATP hydrolyzed, thus driving DNA branch migration. The RuvB motors rotate together with the DNA substrate, which together with the progressing nucleotide cycle forms the mechanistic basis for DNA recombination by continuous branch migration. Branch migration allows RuvC to scan DNA until it finds its consensus sequence, where it cleaves and resolves cruciform DNA. The chain is Holliday junction branch migration complex subunit RuvB from Streptococcus thermophilus (strain ATCC BAA-250 / LMG 18311).